A 184-amino-acid chain; its full sequence is Inosine triphosphate pyrophosphatase (184 aa).

10–15 is a binding site for ITP; sequence TGNVKK. Glu-37 contributes to the Mg(2+) binding site. ITP-binding positions include Lys-49, 65-66, Lys-82, 141-144, Lys-164, and 169-170; these read DT, FGWD, and HR.

It belongs to the HAM1 NTPase family. In terms of assembly, homodimer. The cofactor is Mg(2+). It depends on Mn(2+) as a cofactor.

The protein resides in the cytoplasm. It catalyses the reaction ITP + H2O = IMP + diphosphate + H(+). The catalysed reaction is dITP + H2O = dIMP + diphosphate + H(+). It carries out the reaction XTP + H2O = XMP + diphosphate + H(+). Functionally, pyrophosphatase that hydrolyzes non-canonical purine nucleotides such as inosine triphosphate (ITP), deoxyinosine triphosphate (dITP) or xanthosine 5'-triphosphate (XTP) to their respective monophosphate derivatives. The enzyme does not distinguish between the deoxy- and ribose forms. Probably excludes non-canonical purines from RNA and DNA precursor pools, thus preventing their incorporation into RNA and DNA and avoiding chromosomal lesions. This chain is Inosine triphosphate pyrophosphatase, found in Caenorhabditis elegans.